The following is a 99-amino-acid chain: MAHKKGGGSTRNGRDSRAKRLGVKRYDGQFVPAGSVLVRQRGTVFRPGRNVGMGRDYTLFALIDGYVKFEPISRDKRRVSVYPEPVGRTLPAPAGSATA.

Residues 1–21 (MAHKKGGGSTRNGRDSRAKRL) are disordered.

It belongs to the bacterial ribosomal protein bL27 family.

In Thermomicrobium roseum (strain ATCC 27502 / DSM 5159 / P-2), this protein is Large ribosomal subunit protein bL27.